The chain runs to 483 residues: Cytochrome P450 71A23 (483 aa).

The chain crosses the membrane as a helical span at residues 1–21; sequence MILFLCLIILFIITILFFKKH. Position 429 (cysteine 429) interacts with heme.

It belongs to the cytochrome P450 family. Heme is required as a cofactor.

It localises to the membrane. This is Cytochrome P450 71A23 (CYP71A23) from Arabidopsis thaliana (Mouse-ear cress).